The primary structure comprises 237 residues: ATP synthase subunit a (237 aa).

A run of 4 helical transmembrane segments spans residues 17–37 (LSDM…AVAA), 78–98 (LGVT…PFWL), 178–198 (ILLG…CGSI), and 201–221 (MVIM…AFIF).

The protein belongs to the ATPase A chain family. F-type ATPases have 2 components, CF(1) - the catalytic core - and CF(0) - the membrane proton channel. CF(1) has five subunits: alpha(3), beta(3), gamma(1), delta(1), epsilon(1). CF(0) has three main subunits: a(1), b(2) and c(9-12). The alpha and beta chains form an alternating ring which encloses part of the gamma chain. CF(1) is attached to CF(0) by a central stalk formed by the gamma and epsilon chains, while a peripheral stalk is formed by the delta and b chains.

Its subcellular location is the cell membrane. Functionally, key component of the proton channel; it plays a direct role in the translocation of protons across the membrane. The polypeptide is ATP synthase subunit a (Bacillus caldotenax).